Here is a 116-residue protein sequence, read N- to C-terminus: Large ribosomal subunit protein uL18 (116 aa).

Belongs to the universal ribosomal protein uL18 family. Part of the 50S ribosomal subunit; part of the 5S rRNA/L5/L18/L25 subcomplex. Contacts the 5S and 23S rRNAs.

This is one of the proteins that bind and probably mediate the attachment of the 5S RNA into the large ribosomal subunit, where it forms part of the central protuberance. This chain is Large ribosomal subunit protein uL18, found in Shewanella baltica (strain OS223).